The sequence spans 395 residues: Aspergillopepsin-1 (395 aa).

Positions 1-20 (MVVFSKVTAVVVGLSTIVSA) are cleaved as a signal peptide. Residues 21–70 (VPVVQPRKGFTINQVARPVTNKKTVNLPAVYANALTKYGGTVPDSVKAAA) constitute a propeptide, activation peptide. The Peptidase A1 domain maps to 86-392 (YLTPVKVGGT…DSQGPRLGFA (307 aa)). Residues Asp-102 and Asp-284 contribute to the active site. Cysteines 320 and 355 form a disulfide.

The protein belongs to the peptidase A1 family. Monomer.

It localises to the secreted. The enzyme catalyses Hydrolysis of proteins with broad specificity. Generally favors hydrophobic residues in P1 and P1', but also accepts Lys in P1, which leads to activation of trypsinogen. Does not clot milk.. Its function is as follows. Secreted aspartic endopeptidase that allows assimilation of proteinaceous substrates. The scissile peptide bond is attacked by a nucleophilic water molecule activated by two aspartic residues in the active site. Shows a broad primary substrate specificity. Favors hydrophobic residues at the P1 and P1' positions, but also accepts a lysine residue in the P1 position, leading to the activation of trypsinogen and chymotrypsinogen A. In Aspergillus fumigatus (strain CBS 144.89 / FGSC A1163 / CEA10) (Neosartorya fumigata), this protein is Aspergillopepsin-1 (pepA).